The sequence spans 20 residues: Thrombin-like enzyme okinaxobin-2 (20 aa).

The region spanning 1–20 (VVGGDECNINEHRFLVALYY) is the Peptidase S1 domain.

This sequence belongs to the peptidase S1 family. Snake venom subfamily. In terms of assembly, monomer. Glycosylated. Expressed by the venom gland.

The protein localises to the secreted. With respect to regulation, strongly inactivated by diisopropylfluorophosphate (DFP) and to a lesser extent by tosyl-L-lysine chloromethyl ketone (TLCK). Its function is as follows. Thrombin-like snake venom serine protease. Releases both fibrinopeptides A and B from fibrinogen (FGA and FGB) to form fibrin clots. This chain is Thrombin-like enzyme okinaxobin-2, found in Ovophis okinavensis (Ryukyu Island pit viper).